The primary structure comprises 283 residues: 4-diphosphocytidyl-2-C-methyl-D-erythritol kinase (283 aa).

The active site involves K8. 90-100 (PIGSGLAGGSS) contributes to the ATP binding site. D132 is a catalytic residue.

It belongs to the GHMP kinase family. IspE subfamily.

The enzyme catalyses 4-CDP-2-C-methyl-D-erythritol + ATP = 4-CDP-2-C-methyl-D-erythritol 2-phosphate + ADP + H(+). It functions in the pathway isoprenoid biosynthesis; isopentenyl diphosphate biosynthesis via DXP pathway; isopentenyl diphosphate from 1-deoxy-D-xylulose 5-phosphate: step 3/6. In terms of biological role, catalyzes the phosphorylation of the position 2 hydroxy group of 4-diphosphocytidyl-2C-methyl-D-erythritol. This chain is 4-diphosphocytidyl-2-C-methyl-D-erythritol kinase, found in Chlamydia muridarum (strain MoPn / Nigg).